Here is a 293-residue protein sequence, read N- to C-terminus: Protease HtpX (293 aa).

A run of 2 helical transmembrane segments spans residues Ile-4 to Leu-24 and Ala-33 to Met-53. His-139 provides a ligand contact to Zn(2+). Glu-140 is an active-site residue. A Zn(2+)-binding site is contributed by His-143. 2 helical membrane-spanning segments follow: residues Val-158–Met-178 and Leu-193–Ile-213. A Zn(2+)-binding site is contributed by Glu-222.

It belongs to the peptidase M48B family. Zn(2+) serves as cofactor.

The protein localises to the cell inner membrane. The protein is Protease HtpX of Sodalis glossinidius (strain morsitans).